A 364-amino-acid polypeptide reads, in one-letter code: Probable dual-specificity RNA methyltransferase RlmN (364 aa).

The active-site Proton acceptor is the Glu107. A Radical SAM core domain is found at 113-346 (HEYGNSVCVT…ATIRREQGAD (234 aa)). An intrachain disulfide couples Cys120 to Cys351. Residues Cys127, Cys131, and Cys134 each contribute to the [4Fe-4S] cluster site. S-adenosyl-L-methionine is bound by residues 177 to 178 (GE), Ser209, 232 to 234 (SLH), and Asn308. Cys351 acts as the S-methylcysteine intermediate in catalysis.

The protein belongs to the radical SAM superfamily. RlmN family. It depends on [4Fe-4S] cluster as a cofactor.

Its subcellular location is the cytoplasm. It carries out the reaction adenosine(2503) in 23S rRNA + 2 reduced [2Fe-2S]-[ferredoxin] + 2 S-adenosyl-L-methionine = 2-methyladenosine(2503) in 23S rRNA + 5'-deoxyadenosine + L-methionine + 2 oxidized [2Fe-2S]-[ferredoxin] + S-adenosyl-L-homocysteine. The catalysed reaction is adenosine(37) in tRNA + 2 reduced [2Fe-2S]-[ferredoxin] + 2 S-adenosyl-L-methionine = 2-methyladenosine(37) in tRNA + 5'-deoxyadenosine + L-methionine + 2 oxidized [2Fe-2S]-[ferredoxin] + S-adenosyl-L-homocysteine. Functionally, specifically methylates position 2 of adenine 2503 in 23S rRNA and position 2 of adenine 37 in tRNAs. Confers resistance to some classes of antibiotics. This is Probable dual-specificity RNA methyltransferase RlmN from Staphylococcus saprophyticus subsp. saprophyticus (strain ATCC 15305 / DSM 20229 / NCIMB 8711 / NCTC 7292 / S-41).